The sequence spans 207 residues: Guanylate kinase (207 aa).

The 181-residue stretch at 4-184 (GILFIISAPS…AINDLRTIII (181 aa)) folds into the Guanylate kinase-like domain. Residue 11–18 (APSGTGKS) participates in ATP binding.

This sequence belongs to the guanylate kinase family.

It localises to the cytoplasm. The enzyme catalyses GMP + ATP = GDP + ADP. In terms of biological role, essential for recycling GMP and indirectly, cGMP. This chain is Guanylate kinase, found in Buchnera aphidicola subsp. Schizaphis graminum (strain Sg).